Here is a 98-residue protein sequence, read N- to C-terminus: NADH-ubiquinone oxidoreductase chain 4L (98 aa).

3 consecutive transmembrane segments (helical) span residues 1 to 21 (MPST…GLLL), 29 to 49 (SLLC…LMAL), and 61 to 81 (IVLM…LVMV).

It belongs to the complex I subunit 4L family. Core subunit of respiratory chain NADH dehydrogenase (Complex I) which is composed of 45 different subunits.

Its subcellular location is the mitochondrion inner membrane. The enzyme catalyses a ubiquinone + NADH + 5 H(+)(in) = a ubiquinol + NAD(+) + 4 H(+)(out). Functionally, core subunit of the mitochondrial membrane respiratory chain NADH dehydrogenase (Complex I) which catalyzes electron transfer from NADH through the respiratory chain, using ubiquinone as an electron acceptor. Part of the enzyme membrane arm which is embedded in the lipid bilayer and involved in proton translocation. This is NADH-ubiquinone oxidoreductase chain 4L (MT-ND4L) from Choloepus didactylus (Southern two-toed sloth).